The sequence spans 546 residues: MNSTSRRSANYKPTIWNNEYLQSLNSIYGEKRFLEQAEKLKDEVRMLLEKTSDPLDHIELVDVLQRLAISYHFTEYIDRNLKNIYDILIDGRRWNHADNLHATTLSFRLLRQHGYQVSPEVFRNFMDETGNFKKNLCDDIKGLLSLYEASYLLTEGETIMDSAQAFATHHLKQKLEENMNKNLGDEIAHALELPLHWRVPKLDVRWSIDAYERRQDMNPLLLELAKLDFNIAQSMYQDELKELSRWYSKTHLPEKLAFARDRLVESYLWGLGLASEPHHKYCRMMVAQSTTLISIIDDIYDVYGTLDELQLFTHAVDRWDIKYLEQLPEYMQICFLALFNTVNERSYDFLLDKGFNVIPHSSYRWAELCKTYLIEANWYHSGYKPSLNEYLNQGLISVAGPHALSHTYLCMTDSLKEKHILDLRTNPPVIKWVSILVRLADDLGTSTDELKRGDNPKSIQCHMHDTGCNEEETRAYIKNLIGSTWKKINKDVLMNFEYSMDFRTAAMNGARVSQFMYQYDDDGHGVPEGKSKERVCSLIVEPIPLP.

Asp-297, Asp-301, Asp-441, Thr-445, and Glu-449 together coordinate Mg(2+). Residues 297–301 carry the DDXXD motif motif; the sequence is DDIYD.

The protein belongs to the terpene synthase family. Mg(2+) serves as cofactor.

The catalysed reaction is (2E,6E)-farnesyl diphosphate + H2O = (+)-epi-alpha-bisabolol + diphosphate. It functions in the pathway secondary metabolite biosynthesis; terpenoid biosynthesis. Functionally, sesquiterpene synthase involved in the biosynthesis of (+)-epi-alpha-bisabolol, a precursor of the natural sweetner hernandulcin. The polypeptide is (+)-epi-alpha-bisabolol synthase (Phyla dulcis (Aztec sweet herb)).